Reading from the N-terminus, the 156-residue chain is Small ribosomal subunit protein uS7 (156 aa).

The protein belongs to the universal ribosomal protein uS7 family. In terms of assembly, part of the 30S ribosomal subunit. Contacts proteins S9 and S11.

Functionally, one of the primary rRNA binding proteins, it binds directly to 16S rRNA where it nucleates assembly of the head domain of the 30S subunit. Is located at the subunit interface close to the decoding center, probably blocks exit of the E-site tRNA. This is Small ribosomal subunit protein uS7 from Burkholderia ambifaria (strain MC40-6).